A 239-amino-acid polypeptide reads, in one-letter code: Ribonuclease PH (239 aa).

Residues R86 and 124–126 (GTR) contribute to the phosphate site.

Belongs to the RNase PH family. As to quaternary structure, homohexameric ring arranged as a trimer of dimers.

The enzyme catalyses tRNA(n+1) + phosphate = tRNA(n) + a ribonucleoside 5'-diphosphate. Phosphorolytic 3'-5' exoribonuclease that plays an important role in tRNA 3'-end maturation. Removes nucleotide residues following the 3'-CCA terminus of tRNAs; can also add nucleotides to the ends of RNA molecules by using nucleoside diphosphates as substrates, but this may not be physiologically important. Probably plays a role in initiation of 16S rRNA degradation (leading to ribosome degradation) during starvation. The polypeptide is Ribonuclease PH (Rhizobium johnstonii (strain DSM 114642 / LMG 32736 / 3841) (Rhizobium leguminosarum bv. viciae)).